The primary structure comprises 227 residues: Cytidylate kinase (227 aa).

An ATP-binding site is contributed by 12–20; the sequence is GPSGAGKGT.

It belongs to the cytidylate kinase family. Type 1 subfamily.

It localises to the cytoplasm. It carries out the reaction CMP + ATP = CDP + ADP. The enzyme catalyses dCMP + ATP = dCDP + ADP. In Shigella boydii serotype 18 (strain CDC 3083-94 / BS512), this protein is Cytidylate kinase.